A 365-amino-acid chain; its full sequence is Peptide chain release factor 2 (365 aa).

Glutamine 252 carries the post-translational modification N5-methylglutamine.

The protein belongs to the prokaryotic/mitochondrial release factor family. Methylated by PrmC. Methylation increases the termination efficiency of RF2.

It localises to the cytoplasm. Its function is as follows. Peptide chain release factor 2 directs the termination of translation in response to the peptide chain termination codons UGA and UAA. This is Peptide chain release factor 2 from Shigella flexneri.